A 598-amino-acid chain; its full sequence is Peroxisomal targeting signal receptor (598 aa).

3 disordered regions span residues M1 to S54, R135 to G154, and A208 to E237. The segment covering E9–K22 has biased composition (polar residues). C10 is covalently cross-linked (Glycyl cysteine thioester (Cys-Gly) (interchain with G-Cter in ubiquitin)). K22 participates in a covalent cross-link: Glycyl lysine isopeptide (Lys-Gly) (interchain with G-Cter in ubiquitin). The segment covering H23–V35 has biased composition (basic and acidic residues). Low complexity predominate over residues A220 to E233. TPR repeat units lie at residues P304 to H337, A338 to N371, L372 to Q409, A410 to D447, A448 to D481, A482 to F515, and V516 to E549.

Belongs to the peroxisomal targeting signal receptor family. Ubiquitination at Cys-10 is UBC4-independent but requires the presence of PEX4. Ubiquitination at Lys-22 is UBC4-dependent.

Its subcellular location is the cytoplasm. The protein resides in the peroxisome membrane. Functionally, binds to the C-terminal PTS1-type tripeptide peroxisomal targeting signal (SKL-type) and plays an essential role in peroxisomal protein import. The sequence is that of Peroxisomal targeting signal receptor (PAY32) from Yarrowia lipolytica (strain CLIB 122 / E 150) (Yeast).